Consider the following 570-residue polypeptide: Mitogen-activated protein kinase 11 (570 aa).

The region spanning 26-317 (YEVLEVIGKG…AQEALADPYF (292 aa)) is the Protein kinase domain. Residues 32–40 (IGKGSYGLV) and Lys55 each bind ATP. Asp152 serves as the catalytic Proton acceptor. Position 188 is a phosphothreonine (Thr188). A TXY motif is present at residues 188–190 (TDY). Phosphotyrosine is present on Tyr190.

It belongs to the protein kinase superfamily. CMGC Ser/Thr protein kinase family. MAP kinase subfamily. Post-translationally, dually phosphorylated on Thr-188 and Tyr-190, which activates the enzyme.

It carries out the reaction L-seryl-[protein] + ATP = O-phospho-L-seryl-[protein] + ADP + H(+). It catalyses the reaction L-threonyl-[protein] + ATP = O-phospho-L-threonyl-[protein] + ADP + H(+). Its activity is regulated as follows. Activated by threonine and tyrosine phosphorylation. The chain is Mitogen-activated protein kinase 11 (MPK11) from Oryza sativa subsp. japonica (Rice).